A 553-amino-acid chain; its full sequence is Phospholipase B-like 1 (553 aa).

The signal sequence occupies residues 1–38; it reads MTRGGPGGRPGLPQPPPLLLLLLLLPLLLVTAEPPKPA. N-linked (GlcNAc...) (high mannose) asparagine; alternate glycosylation occurs at Asn71. Asn71 carries N-linked (GlcNAc...) (hybrid) asparagine; alternate glycosylation. Residues 209-227 constitute a propeptide, removed in mature form; that stretch reads LSPTKNGSLKVFKRWDMGH. N-linked (GlcNAc...) (high mannose) asparagine; alternate glycans are attached at residues Asn308 and Asn366. N-linked (GlcNAc...) (hybrid) asparagine; alternate glycans are attached at residues Asn308 and Asn366. An N-linked (GlcNAc...) asparagine glycan is attached at Asn411. Intrachain disulfides connect Cys470–Cys475 and Cys474–Cys489. N-linked (GlcNAc...) (high mannose) asparagine; alternate glycosylation is present at Asn526. Asn526 is a glycosylation site (N-linked (GlcNAc...) (hybrid) asparagine; alternate).

It belongs to the phospholipase B-like family. As to quaternary structure, may form a homodimer, each monomer is composed of a chain A and a chain B. In terms of processing, the maturation cleavages that produces chains A and B are required to open the putative substrate binding pocket. Both chains A and B remain associated in the mature protein. As to expression, expressed in neutrophils and monocytes.

It localises to the lysosome. Functionally, in view of the small size of the putative binding pocket, it has been proposed that it may act as an amidase or a peptidase. Exhibits a weak phospholipase activity, acting on various phospholipids, including phosphatidylcholine, phosphatidylinositol, phosphatidylethanolamine and lysophospholipids. This chain is Phospholipase B-like 1 (PLBD1), found in Homo sapiens (Human).